Reading from the N-terminus, the 416-residue chain is CinA-like protein (416 aa).

The protein belongs to the CinA family.

In Amoebophilus asiaticus (strain 5a2), this protein is CinA-like protein.